Reading from the N-terminus, the 184-residue chain is F(420)H(2) dehydrogenase subunit B (184 aa).

The tract at residues 1–20 (MGEVKETKTNNSKENPEEEV) is disordered. Positions 61, 62, 126, and 156 each coordinate [4Fe-4S] cluster.

It belongs to the complex I 20 kDa subunit family. As to quaternary structure, the FPO complex is composed of at least 13 different subunits. Requires FAD as cofactor. The cofactor is [4Fe-4S] cluster.

The protein localises to the cell inner membrane. The enzyme catalyses methanophenazine + reduced coenzyme F420-(gamma-L-Glu)(n) = dihydromethanophenazine + oxidized coenzyme F420-(gamma-L-Glu)(n) + H(+). Component of the F(420)H(2) dehydrogenase (FPO complex) which is part of the energy-conserving F(420)H(2):heterodisulfide oxidoreductase system. The membrane-bound electron transfer system of the complex plays an important role in the metabolism of methylotrophic methanogens when the organisms grow on methanol or methylamines. Catalyzes the oxidation of methanophenazine to dihydromethanophenazine. It shuttles electrons from F(420)H(2), via FAD and iron-sulfur (Fe-S) centers, to methanophenazine (an electron carrier in the membrane). It couples the redox reaction to proton translocation (for every two electrons transferred, two hydrogen ions are translocated across the cytoplasmic membrane), and thus conserves the redox energy in a proton gradient. It also catalyzes the oxidation of F(420)H(2) with quinones such as 2,3-dimethyl-1,4-naphthoquinone, 2-methyl-1,4-naphthoquinone and tetramethyl-p-benzoquinone. The protein is F(420)H(2) dehydrogenase subunit B (fpoB) of Methanosarcina mazei (strain ATCC BAA-159 / DSM 3647 / Goe1 / Go1 / JCM 11833 / OCM 88) (Methanosarcina frisia).